The primary structure comprises 101 residues: RNA-binding protein Hfq (101 aa).

Residues 9-68 (DPFLNALRRERVPVSIYLVNGIKLQGQVESFDQFVILLKNTVSQMVYKHAISTVVPSRPV) enclose the Sm domain. Residues 63-101 (VPSRPVSHHSNNPSGSTNNYHGSNPSAPQQPQQDSDDAE) form a disordered region. The span at 70-86 (HHSNNPSGSTNNYHGSN) shows a compositional bias: polar residues.

Belongs to the Hfq family. As to quaternary structure, homohexamer.

RNA chaperone that binds small regulatory RNA (sRNAs) and mRNAs to facilitate mRNA translational regulation in response to envelope stress, environmental stress and changes in metabolite concentrations. Also binds with high specificity to tRNAs. Positively regulates the expression of the yst gene for heat-stable enterotoxin (Y-ST). This Yersinia enterocolitica protein is RNA-binding protein Hfq.